We begin with the raw amino-acid sequence, 201 residues long: Cell division protein SepF (201 aa).

Residues 1-94 are disordered; sequence MALKDLFSGF…TTSKNNARNV (94 aa). Over residues 13 to 28 the composition is skewed to acidic residues; it reads VEEEDDELEAPPEENE. Low complexity predominate over residues 35–44; it reads PKQQAQSQNQ. The span at 59 to 88 shows a compositional bias: polar residues; the sequence is SIQSVPKKQSTRLQQSSGERKYQMNNTTSK.

This sequence belongs to the SepF family. In terms of assembly, homodimer. Interacts with FtsZ.

It localises to the cytoplasm. In terms of biological role, cell division protein that is part of the divisome complex and is recruited early to the Z-ring. Probably stimulates Z-ring formation, perhaps through the cross-linking of FtsZ protofilaments. Its function overlaps with FtsA. The protein is Cell division protein SepF of Staphylococcus saprophyticus subsp. saprophyticus (strain ATCC 15305 / DSM 20229 / NCIMB 8711 / NCTC 7292 / S-41).